Here is a 698-residue protein sequence, read N- to C-terminus: MSSCASLGGPVPLPPPGPSAALTSGAPARALHVELPSQQRRLRHLRNIAARNIVNRNGHQLLDTYFTLHLCDNEKIFKEFYRSEVIKNSLNPTWRSLDFGIMPDRLDTSVSCFVVKIWGGKEEAFQLLIEWKVYLDGLKYLGQQIHARNQNEIIFGLNDGYYGAPCEHKGHPNAQKNLLQVDQNCVRNSYDVFSLLRLHRAQCAIKQTQVTVQRLGKEIEEKLRLTSTSNELKKESECLRLKILVLRNELERQKKALGREVAFLHKQQMALQDKGSAFSTEHGKLQLQKDSLSELRKECTAKRELFLKTNAQLTIRCRQLLSELSYIYPIDLNENKDYFVCGVKLPNSEDFQAKDDGSIAVALGYTAHLVSMISFFLQVPLRYPIIHKGSRSTIKDNINDKLTEKEREFPLYPKGGEKLQFDYGVYLLNKNIAQLRYQHGLGTPDLRQTLPNLKNFMEHGLMVRCDRHHISNAIPVPKRQSSTFGGADGGFSAGIPSPDKVHRKRASSENERLQYKTPPPSYNSALTQPGVAMPTSGDSERKVAPLSSSLDTSLDFSKENKKAGVDLGSSVSGDHGNSDSGQEQGEALPGHLAAVNGTALPSEQAGPAGTLLPGSCHPAPSAELCCAVEQAEEIIGLEATGFTSGDQLEALSCIPVDSAVAVECDEQVLGEFEEFSRRIYALSENVSSFRRPRRSSDK.

Positions M1–P10 are enriched in low complexity. The tract at residues M1 to A21 is disordered. In terms of domain architecture, C2 spans T23–N149. The sufficient for interaction with STX7; VTI1B AND STX8 stretch occupies residues H199–Q268. The stretch at R200–E304 forms a coiled coil. The interval M269–L441 is sufficient for interaction with VPS16, required for interaction with CEP63. Residues G442–K698 form a required for interaction with PRKDC, XRCC6 and XRCC5 region. Disordered regions lie at residues P477–D551 and V565–E586. S492 carries the post-translational modification Phosphoserine. S497 is modified (phosphoserine; by MTOR). S507 is modified (phosphoserine). T517 is subject to Phosphothreonine. Phosphoserine is present on residues S521, S548, S549, S570, and S688.

In terms of assembly, component of the PI3K (PI3KC3/PI3K-III/class III phosphatidylinositol 3-kinase) complex II (PI3KC3-C2) in which the core composed of the catalytic subunit PIK3C3, the regulatory subunit PIK3R4 and BECN1 is associated with UVRAG; in the complex interacts directly with BECN1. PI3KC3-C2 can associate with further regulatory subunits such as RUBCN and probably SH3GLB1/Bif-1. Interacts with SH3GLB1; UVRAG bridges the interaction to BECN1 indicative for an association with the PI3K complex PI3KC3-C2. Interacts with RINT1. Associates with the NRZ complex under basal conditions and dissociates from it under autophagy conditions to associate with the PI3K complex; these complex associations seem to be mutually exclusive. Interacts with VPS16; VPS11; VPS18; VPS33 (VPS33A or VPS33B) and VPS39; indicative for an association with a class C Vps tethering complex (possibly the HOPS complex). Interacts with RAB7A; RAB7A competes with UVRAG for RUBCN binding. Interacts with STX7, VTI1B, STX8. Interacts with PRKDC, XRCC6 and XRCC5; indicative for an association with the DNA-dependent protein kinase complex DNA-PK. Interacts with CEP63. Directly interacts with FEZ1 and SCOC; the interaction with SCOC is reduced by amino acid starvation, but the complex is stabilized in the presence of FEZ1. Interacts with BECN1P1/BECN2. Interacts with SLAMF1. Interacts with RUBCNL/PACER; promoting targeting of UVRAG to autophagosome. Interacts with WNK1. In terms of processing, phosphorylated at Ser-497 by MTOR under basal conditions; increases the interaction with RUBCN implicated in inhibitory effect of RUBCN on PI3KC3 and decreases interaction with RAB7A, and VPS16 and VPS39 (indicative for a class C Vps complex, possibly the HOPS complex).

Its subcellular location is the late endosome. It localises to the lysosome. It is found in the cytoplasmic vesicle. The protein resides in the autophagosome. The protein localises to the early endosome. Its subcellular location is the endoplasmic reticulum. It localises to the midbody. It is found in the chromosome. The protein resides in the centromere. Functionally, versatile protein that is involved in regulation of different cellular pathways implicated in membrane trafficking. Involved in regulation of the COPI-dependent retrograde transport from Golgi and the endoplasmic reticulum by associating with the NRZ complex; the function is dependent on its binding to phosphatidylinositol 3-phosphate (PtdIns(3)P). During autophagy acts as a regulatory subunit of the alternative PI3K complex II (PI3KC3-C2) that mediates formation of phosphatidylinositol 3-phosphate and is believed to be involved in maturation of autophagosomes and endocytosis. Activates lipid kinase activity of PIK3C3. Involved in the regulation of degradative endocytic trafficking and cytokinesis, and in regulation of ATG9A transport from the Golgi to the autophagosome; the functions seems to implicate its association with PI3KC3-C2. Involved in maturation of autophagosomes and degradative endocytic trafficking independently of BECN1 but depending on its association with a class C Vps complex (possibly the HOPS complex); the association is also proposed to promote autophagosome recruitment and activation of Rab7 and endosome-endosome fusion events. Enhances class C Vps complex (possibly HOPS complex) association with a SNARE complex and promotes fusogenic SNARE complex formation during late endocytic membrane fusion. In case of negative-strand RNA virus infection is required for efficient virus entry, promotes endocytic transport of virions and is implicated in a VAMP8-specific fusogenic SNARE complex assembly. Its function is as follows. Involved in maintaining chromosomal stability. Promotes DNA double-strand break (DSB) repair by association with DNA-dependent protein kinase complex DNA-PK and activating it in non-homologous end joining (NHEJ). Required for centrosome stability and proper chromosome segregation. The polypeptide is UV radiation resistance-associated protein (Uvrag) (Mus musculus (Mouse)).